The sequence spans 77 residues: Small ribosomal subunit protein uS17 (77 aa).

It belongs to the universal ribosomal protein uS17 family. Part of the 30S ribosomal subunit.

One of the primary rRNA binding proteins, it binds specifically to the 5'-end of 16S ribosomal RNA. The polypeptide is Small ribosomal subunit protein uS17 (Rickettsia rickettsii (strain Sheila Smith)).